The primary structure comprises 310 residues: Protoheme IX farnesyltransferase (310 aa).

Helical transmembrane passes span 31-51 (VIEL…RGSV), 53-73 (PLLI…ANTL), 102-122 (NALI…WGTS), 124-144 (LLSG…YTLL), 149-169 (TSQN…IGWS), 170-190 (AVTG…FFWT), 242-262 (LATG…FLVM), and 289-309 (LAVV…TLLG).

Belongs to the UbiA prenyltransferase family. Protoheme IX farnesyltransferase subfamily.

It localises to the cell membrane. The enzyme catalyses heme b + (2E,6E)-farnesyl diphosphate + H2O = Fe(II)-heme o + diphosphate. It functions in the pathway porphyrin-containing compound metabolism; heme O biosynthesis; heme O from protoheme: step 1/1. In terms of biological role, converts heme B (protoheme IX) to heme O by substitution of the vinyl group on carbon 2 of heme B porphyrin ring with a hydroxyethyl farnesyl side group. This chain is Protoheme IX farnesyltransferase, found in Mycobacterium sp. (strain JLS).